We begin with the raw amino-acid sequence, 411 residues long: Putative odorant receptor 59c (411 aa).

Residues 1 to 46 lie on the Cytoplasmic side of the membrane; the sequence is MTKFFFKRLQTAPLDQEVSSLDASDYYYRIAFFLGWTPPKGALLRW. A helical membrane pass occupies residues 47–67; sequence IYSLWTLTTMWLGIVYLPLGL. Topologically, residues 68-86 are extracellular; sequence SLTYVKHFDRFTPTEFLTS. Residues 87 to 107 traverse the membrane as a helical segment; that stretch reads LQVDINCIGNVIKSCVTYSQM. Residues 108–139 are Cytoplasmic-facing; that stretch reads WRFRRMNELISSLDKRCVTTTQRRIFHKMVAR. Residues 140 to 160 form a helical membrane-spanning segment; that stretch reads VNLIVILFLSTYLGFCFLTLF. At 161–185 the chain is on the extracellular side; it reads TSVFAGKAPWQLYNPLVDWRKGHWQ. The helical transmembrane segment at 186–206 threads the bilayer; that stretch reads LWIASILEYCVVSIGTMQELM. At 207 to 271 the chain is on the cytoplasmic side; the sequence is SDTYAIVFIS…QIIRPILSIT (65 aa). Residues 272–292 traverse the membrane as a helical segment; sequence IFAQFMLVGIDLGLAAISILF. At 293–296 the chain is on the extracellular side; that stretch reads FPNT. A helical membrane pass occupies residues 297–317; that stretch reads IWTIMANVSFIVAICTESFPC. Over 318–369 the chain is Cytoplasmic; the sequence is CMLCEHLIEDSVHVSNALFHSNWITADRSYKSAVLYFLHRAQQPIQFTAGSI. Residues 370 to 390 form a helical membrane-spanning segment; the sequence is FPISVQSNIAVAKFAFTIITI. The Extracellular segment spans residues 391 to 411; it reads VNQMNLGEKFFSDRSNGDINP.

This sequence belongs to the insect chemoreceptor superfamily. Heteromeric odorant receptor channel (TC 1.A.69) family. Or2a subfamily. Interacts with Orco. Complexes exist early in the endomembrane system in olfactory sensory neurons (OSNs), coupling these complexes to the conserved ciliary trafficking pathway. In terms of tissue distribution, expressed in olfactory sensory neurons in the maxillary palp.

It is found in the cell membrane. Odorant receptor which mediates acceptance or avoidance behavior, depending on its substrates. The odorant receptor repertoire encodes a large collection of odor stimuli that vary widely in identity, intensity, and duration. May form a complex with Orco to form odorant-sensing units, providing sensitive and prolonged odorant signaling and calcium permeability. This chain is Putative odorant receptor 59c (Or59c), found in Drosophila melanogaster (Fruit fly).